The sequence spans 145 residues: Large ribosomal subunit protein uL15 (145 aa).

Residues 1 to 13 (MIRSKRKINKLRG) show a composition bias toward basic residues. Residues 1 to 44 (MIRSKRKINKLRGSRSNGGGCTKKRRGAGNKGGRGNAGASKQHW) form a disordered region.

It belongs to the universal ribosomal protein uL15 family. Part of the 50S ribosomal subunit.

Functionally, binds to the 23S rRNA. The chain is Large ribosomal subunit protein uL15 from Methanobrevibacter smithii (strain ATCC 35061 / DSM 861 / OCM 144 / PS).